Here is a 301-residue protein sequence, read N- to C-terminus: Phosphoribosylaminoimidazole-succinocarboxamide synthase (301 aa).

Belongs to the SAICAR synthetase family.

It catalyses the reaction 5-amino-1-(5-phospho-D-ribosyl)imidazole-4-carboxylate + L-aspartate + ATP = (2S)-2-[5-amino-1-(5-phospho-beta-D-ribosyl)imidazole-4-carboxamido]succinate + ADP + phosphate + 2 H(+). Its pathway is purine metabolism; IMP biosynthesis via de novo pathway; 5-amino-1-(5-phospho-D-ribosyl)imidazole-4-carboxamide from 5-amino-1-(5-phospho-D-ribosyl)imidazole-4-carboxylate: step 1/2. This Cyberlindnera jadinii (Torula yeast) protein is Phosphoribosylaminoimidazole-succinocarboxamide synthase (ADE1).